Reading from the N-terminus, the 599-residue chain is MSRHEGVSCDSCLKSNFNGRRYKCLICYDYDLCADCYEDGVTSTRHLVEHPMQCILTRSDIELYFGGEMLASDQPQSFTCPYCKKMGFSDATLLEHVSAEHTETSLEVVCPVCAGLPGGEPNLVTDDFAGHLTLEHRQGPRELISFLDEPSAIRHGGGVRRIPGRTLGGPRTRRSNMHFSSSSGLSALSPSGRESVDPIAELLSQLSGVRRGGPPTSQLQQLQMQMQLDRQQVTASRQIDRLPRRAHPIVSTSNSNAAMAEVISGGAGGSGGSGAVGSGSGGGSGATAPPNLRTTEWPVTASFSTSASNHSQTQSSLAANSLNAREAIGTSSSAGSNVLGISVGVGGTANGNGGAGSSGVATGAGGAGQGGGQGGAAAGESFLLAQFMQPTFTEAEWAVVESMRADRSMFVQSLMLSMLCTEALDLNASDESLAKSDNVNKGQQQQQEDAEAEAQAETLLNNNADVEQQQQQQQLQPAMVRQVNQMQQTSPEDFVCDEYRYKNKKANTTQTSGTGGLGGAGATAAPGGGASGAGTKPTADRGIERRSGRPPPGEMATGSQQPQQQQQSTANPAASQQKYKQNASAATAAGNTNQIPDTR.

The ZZ-type zinc-finger motif lies at His4–Asp60. Cys9, Cys12, Cys24, Cys27, Cys33, Cys36, His46, and His50 together coordinate Zn(2+). The C2H2-type zinc-finger motif lies at Phe78 to His101. Disordered regions lie at residues His155–Arg193, Asp229–Ser253, Gly269–Thr294, Val466–Met486, and Asn507–Arg599. 2 stretches are compositionally biased toward low complexity: residues Arg160–Pro170 and Ser180–Gly192. Residues Gly269–Gly285 are compositionally biased toward gly residues. Gly residues predominate over residues Gly513–Gly532. Residues Thr538 to Ser547 are compositionally biased toward basic and acidic residues. The span at Ser559–Asn593 shows a compositional bias: low complexity.

Belongs to the KCMF1 family. In terms of assembly, interacts with poe.

It carries out the reaction S-ubiquitinyl-[E2 ubiquitin-conjugating enzyme]-L-cysteine + [acceptor protein]-L-lysine = [E2 ubiquitin-conjugating enzyme]-L-cysteine + N(6)-ubiquitinyl-[acceptor protein]-L-lysine.. Functionally, has intrinsic E3 ubiquitin ligase activity and promotes ubiquitination. Involved in the negative regulation of the Ras/MAPK signaling pathway in the wing by acting with the E2 enzyme Unc6 and the putative E3 ligases poe and Ufd4 to mediate the ubiquitination and proteasomal degradation of rl/MAPK. This chain is E3 ubiquitin-protein ligase Kcmf1, found in Drosophila melanogaster (Fruit fly).